Reading from the N-terminus, the 293-residue chain is Glycerophosphodiester phosphodiesterase (293 aa).

The first 26 residues, 1–26, serve as a signal peptide directing secretion; sequence MRKNRILALFVLSLGLLSFMVTPVSA. A GP-PDE domain is found at 38 to 290; the sequence is ILTVAHRGAS…NYPDLFHKVK (253 aa). The active-site Proton acceptor is H43. Residues H43, R44, and E70 each coordinate sn-glycerol 3-phosphate. Ca(2+)-binding residues include E70 and D72. Positions 85, 152, and 188 each coordinate sn-glycerol 3-phosphate. The Proton donor role is filled by H85. E152 provides a ligand contact to Ca(2+).

It belongs to the glycerophosphoryl diester phosphodiesterase family. It depends on Ca(2+) as a cofactor.

It is found in the secreted. It catalyses the reaction a sn-glycero-3-phosphodiester + H2O = an alcohol + sn-glycerol 3-phosphate + H(+). Its function is as follows. Glycerophosphodiester phosphodiesterase hydrolyzes glycerophosphodiesters into glycerol-3-phosphate (G3P) and the corresponding alcohol. Involved in wall teichoic acid (WTA) metabolism during phosphate starvation. Catalyzes the degradation of WTA, enabling the utilization of WTA as a phosphate reserve under limiting conditions. Is highly selective for the poly(gylcerol phosphate) WTA backbone and catalyzes exolytic cleavage of individual monomer units. In vitro is active toward the WTA oligomer mimics glycerophosphoglycerol (GPG) and bis-glycerophosphoglycerol (bGPG). This chain is Glycerophosphodiester phosphodiesterase, found in Bacillus subtilis (strain 168).